A 330-amino-acid polypeptide reads, in one-letter code: Peptide transport system ATP-binding protein SapD (330 aa).

Residues 6–259 form the ABC transporter domain; the sequence is IRNLTIEFKT…PHHPYTQALI (254 aa). 40-47 is an ATP binding site; that stretch reads GESGSGKS.

This sequence belongs to the ABC transporter superfamily.

It is found in the cell inner membrane. Its function is as follows. Involved in a peptide intake transport system that plays a role in the resistance to antimicrobial peptides. In Salmonella typhimurium (strain LT2 / SGSC1412 / ATCC 700720), this protein is Peptide transport system ATP-binding protein SapD.